A 1003-amino-acid chain; its full sequence is MTIRLNKVTRDLNVGITTVVEFLQKKGYTIEASPNAKITEEQYAVLVKEFSTDKNLKIESEKFSQERQNKDRNKASISIEGFESKKEKEEVVKTVIPEEARPKLKQVGKIDLDNLNKKTAPKVVEPAAKVIEQTPKAEPVVEKVVERKETPQPEKETPKPVVVEEKKPEPAPQPAPAPVLEEKKEPKIEKTEEKTPQVKEMEKETPEAAPVQEKEEDDVFKIRPTEFKSKINVVGQIDLAALNQSTRPKKKSKEEKRKEREEKDKQRQEQRKLMKDAIIKEIRKGDDKISKNSVNDDAAKKKKRNRINKERVDINAAGTTNAGGASNNNQRNDNANRPNRNNNSKPNGNNNQGGGKFNKDRFKKPVVKAEVSDEDVAKQVKETLARLTNKTKNKAAKYRKEKRENVQNRLMEQEEMEQEDSKILKLTEFVTANELASMMDIPVTQVIATCMSIGIMVSINQRLDAETINLVAEEFGYKTEYVSAEVAQAITEEEDNEEDLQPRAPIVTVMGHVDHGKTSLLDYIRKANVIAGEAGGITQHIGAYNVKLEDGRHITFLDTPGHEAFTAMRARGAKVTDIAIIIVAADDNVMPQTKEAINHAMAAGVPIVFAINKVDKPHANPDKIKEELAAMNFLVEEWGGKYQSQDISAKKGTGVHDLLEKVLLEAEMLDLKANPDRKATGSIIESSLDKGRGYVATMLVANGTLKMGDIVLAGTSYGKVKAMFNERNQRIKEAGPSEPVLILGLNGAPAAGDTFHVIDTEQEARDIANKREQLQREQGLRTQKLLTLDEVGRRLALGDFHELNVIVKGDVDGSVEALSDSLIKLSTEQVQVNVIHKGVGQISESDVTLAAASDAIIVGFQVRPSSSAGKLAEQEGVDIRKYSVIYDAIEEVKAAMEGMLAPTLKEQITATIEVREVFNITKVGLVAGAMVKTGKVKRSDKARLIRDGIVVFTGAINALKRFKDDVKEVGTNFECGISLTNCNDIKVGDIIEAYEEVEVKQTL.

Basic and acidic residues-rich tracts occupy residues 61 to 74 (EKFS…DRNK), 139 to 169 (PVVE…KKPE), 180 to 206 (LEEK…KETP), 219 to 229 (VFKIRPTEFKS), and 252 to 290 (SKEE…DKIS). Disordered regions lie at residues 61–81 (EKFS…SIEG) and 135–362 (PKAE…KDRF). A compositionally biased stretch (low complexity) spans 315 to 350 (NAAGTTNAGGASNNNQRNDNANRPNRNNNSKPNGNN). The tr-type G domain maps to 502–672 (PRAPIVTVMG…LLEAEMLDLK (171 aa)). The segment at 511–518 (GHVDHGKT) is G1. Position 511–518 (511–518 (GHVDHGKT)) interacts with GTP. Positions 536-540 (GITQH) are G2. The tract at residues 558–561 (DTPG) is G3. GTP-binding positions include 558–562 (DTPGH) and 612–615 (NKVD). Residues 612 to 615 (NKVD) are G4. Residues 648-650 (SAK) are G5.

This sequence belongs to the TRAFAC class translation factor GTPase superfamily. Classic translation factor GTPase family. IF-2 subfamily.

Its subcellular location is the cytoplasm. One of the essential components for the initiation of protein synthesis. Protects formylmethionyl-tRNA from spontaneous hydrolysis and promotes its binding to the 30S ribosomal subunits. Also involved in the hydrolysis of GTP during the formation of the 70S ribosomal complex. The protein is Translation initiation factor IF-2 of Phocaeicola vulgatus (strain ATCC 8482 / DSM 1447 / JCM 5826 / CCUG 4940 / NBRC 14291 / NCTC 11154) (Bacteroides vulgatus).